The primary structure comprises 695 residues: Rho-related BTB domain-containing protein 1 (695 aa).

The segment at 1–210 is rho-like; the sequence is MDSDMDYERP…DNAIRAALIS (210 aa). GTP-binding positions include 21 to 28, 84 to 88, and 140 to 143; these read GDNAVGKT, DTFGD, and CQLD. BTB domains lie at 266–426 and 484–551; these read ADVL…DEKE and SDVT…SPNL. A disordered region spans residues 325 to 351; sequence SLGSAEEGKEGPQRTPQADPGASSGQD.

This sequence belongs to the small GTPase superfamily. Rho family. Highest expression in heart and testis.

The chain is Rho-related BTB domain-containing protein 1 (Rhobtb1) from Mus musculus (Mouse).